The primary structure comprises 254 residues: Geranylgeranylglyceryl phosphate synthase (254 aa).

Mg(2+) is bound by residues Asp28 and Ser57. Sn-glycerol 1-phosphate-binding positions include 176-182, 207-208, and 229-230; these read YLEAGSG, GG, and GT.

This sequence belongs to the GGGP/HepGP synthase family. Group II subfamily. It depends on Mg(2+) as a cofactor.

The protein resides in the cytoplasm. It catalyses the reaction sn-glycerol 1-phosphate + (2E,6E,10E)-geranylgeranyl diphosphate = sn-3-O-(geranylgeranyl)glycerol 1-phosphate + diphosphate. It functions in the pathway membrane lipid metabolism; glycerophospholipid metabolism. Prenyltransferase that catalyzes the transfer of the geranylgeranyl moiety of geranylgeranyl diphosphate (GGPP) to the C3 hydroxyl of sn-glycerol-1-phosphate (G1P). This reaction is the first ether-bond-formation step in the biosynthesis of archaeal membrane lipids. The chain is Geranylgeranylglyceryl phosphate synthase from Pyrococcus horikoshii (strain ATCC 700860 / DSM 12428 / JCM 9974 / NBRC 100139 / OT-3).